The primary structure comprises 184 residues: Bifunctional protein PyrR (184 aa).

Positions Ile99 to Thr111 match the PRPP-binding motif.

This sequence belongs to the purine/pyrimidine phosphoribosyltransferase family. PyrR subfamily. As to quaternary structure, homodimer and homohexamer; in equilibrium.

It carries out the reaction UMP + diphosphate = 5-phospho-alpha-D-ribose 1-diphosphate + uracil. In terms of biological role, regulates transcriptional attenuation of the pyrimidine nucleotide (pyr) operon by binding in a uridine-dependent manner to specific sites on pyr mRNA. This disrupts an antiterminator hairpin in the RNA and favors formation of a downstream transcription terminator, leading to a reduced expression of downstream genes. Its function is as follows. Also displays a weak uracil phosphoribosyltransferase activity which is not physiologically significant. In Acetivibrio thermocellus (strain ATCC 27405 / DSM 1237 / JCM 9322 / NBRC 103400 / NCIMB 10682 / NRRL B-4536 / VPI 7372) (Clostridium thermocellum), this protein is Bifunctional protein PyrR.